Here is an 818-residue protein sequence, read N- to C-terminus: H(+)/Cl(-) exchange transporter 3 (818 aa).

The Cytoplasmic segment spans residues 1–125 (MESEQLFHRG…WEMTKSLYDA (125 aa)). Short sequence motifs (di-leucine internalization motif; mediates targeting to late endosome and lysosome membranes) lie at residues 28–29 (LL), 46–47 (LL), and 71–75 (LLDLL). Residues 126-163 (WSGWLVVTLTGLASGALAGLIDIAADWMTDLKEGICLS) form a helical membrane-spanning segment. A glycan (N-linked (GlcNAc...) asparagine) is linked at Asn-177. A helical membrane pass occupies residues 209 to 232 (MNYIMYIFWALSFAFLAVSLVKVF). The Selectivity filter part_1 signature appears at 238–242 (GSGIP). Residue Ser-239 participates in chloride binding. Residues 241–248 (IPEIKTIL) constitute an intramembrane region (helical). 2 consecutive transmembrane segments (helical) span residues 258–276 (GKWT…VASG) and 282–301 (EGPL…YLFP). The Selectivity filter part_2 signature appears at 280-284 (GKEGP). 2 intramembrane regions (helical) span residues 313 to 325 (VLSA…VSVA) and 329 to 337 (PIGGVLFSL). Helical transmembrane passes span 349–367 (LWRS…RSIN), 391–416 (FPFI…AWCR), and 423–443 (FGKY…VIAF). Asn-451 and Asn-479 each carry an N-linked (GlcNAc...) asparagine glycan. 2 consecutive transmembrane segments (helical) span residues 500–520 (IWQL…TFGI) and 525–544 (GLFI…VGIA). The short motif at 525-529 (GLFIP) is the Selectivity filter part_3 element. Residue Phe-527 coordinates chloride. 2 intramembrane regions (helical) span residues 572–586 (GLYA…LGGV) and 590–601 (TVSLVVIVFELT). Positions 602-605 (GGLE) form an intramembrane region, note=Loop between two helices. Residues 606–624 (YIVPLMAAVMTSKWVGDAF) form a helical membrane-spanning segment. Residues 625-818 (GREGIYEAHI…NQDPASIMFN (194 aa)) are Cytoplasmic-facing. A chloride-binding site is contributed by Tyr-630. CBS domains are found at residues 658 to 722 (MRPR…ARKK) and 755 to 812 (LDMS…NQDP). ATP-binding positions include 689 to 691 (YNG) and 796 to 799 (TKKD).

This sequence belongs to the chloride channel (TC 2.A.49) family. ClC-3/CLCN3 subfamily. Monomer and homodimer. Forms heterodimers with CLCN4. In terms of assembly, interacts with GOPC, PDZK1 and NHERF1/EBP50. In terms of processing, N-glycosylated. Expressed primarily in tissues derived from neuroectoderm. Within the brain, its expression is particularly evident in the hippocampus, olfactory cortex, and olfactory bulb. Highly expressed in aortic and coronary vascular smooth muscle cells, and aortic endothelial cells. Also expressed in tracheal and alveolar epithelial cells, and intima and media of the pulmonary vessels. Expressed in bronchus and colon (at protein level).

It is found in the early endosome membrane. The protein localises to the late endosome membrane. It localises to the lysosome membrane. The protein resides in the cell membrane. Its subcellular location is the golgi apparatus membrane. It is found in the cell projection. The protein localises to the ruffle membrane. Strongly outwardly rectifying, electrogenic H(+)/Cl(-)exchanger which mediates the exchange of chloride ions against protons. The CLC channel family contains both chloride channels and proton-coupled anion transporters that exchange chloride or another anion for protons. The presence of conserved gating glutamate residues is typical for family members that function as antiporters. In terms of biological role, strongly outwardly rectifying, electrogenic H(+)/Cl(-)exchanger which mediates the exchange of chloride ions against protons. The sequence is that of H(+)/Cl(-) exchange transporter 3 (CLCN3) from Homo sapiens (Human).